The chain runs to 418 residues: Glutamyl-tRNA reductase (418 aa).

Substrate is bound by residues 49-52 (TCNR), S109, 114-116 (EPQ), and Q120. The active-site Nucleophile is C50. NADP(+) is bound at residue 189 to 194 (GAGETI).

The protein belongs to the glutamyl-tRNA reductase family. In terms of assembly, homodimer.

The catalysed reaction is (S)-4-amino-5-oxopentanoate + tRNA(Glu) + NADP(+) = L-glutamyl-tRNA(Glu) + NADPH + H(+). It participates in porphyrin-containing compound metabolism; protoporphyrin-IX biosynthesis; 5-aminolevulinate from L-glutamyl-tRNA(Glu): step 1/2. Catalyzes the NADPH-dependent reduction of glutamyl-tRNA(Glu) to glutamate 1-semialdehyde (GSA). The polypeptide is Glutamyl-tRNA reductase (Shigella dysenteriae serotype 1 (strain Sd197)).